The sequence spans 892 residues: Isoleucine--tRNA ligase (892 aa).

The 'HIGH' region motif lies at Pro60–His70. Glu552 serves as a coordination point for L-isoleucyl-5'-AMP. Residues Lys593–Ser597 carry the 'KMSKS' region motif. Position 596 (Lys596) interacts with ATP. Zn(2+) is bound by residues Cys862, Cys865, Cys879, and Cys882.

The protein belongs to the class-I aminoacyl-tRNA synthetase family. IleS type 1 subfamily. In terms of assembly, monomer. It depends on Zn(2+) as a cofactor.

The protein resides in the cytoplasm. It catalyses the reaction tRNA(Ile) + L-isoleucine + ATP = L-isoleucyl-tRNA(Ile) + AMP + diphosphate. Functionally, catalyzes the attachment of isoleucine to tRNA(Ile). As IleRS can inadvertently accommodate and process structurally similar amino acids such as valine, to avoid such errors it has two additional distinct tRNA(Ile)-dependent editing activities. One activity is designated as 'pretransfer' editing and involves the hydrolysis of activated Val-AMP. The other activity is designated 'posttransfer' editing and involves deacylation of mischarged Val-tRNA(Ile). This Mycoplasmopsis agalactiae (strain NCTC 10123 / CIP 59.7 / PG2) (Mycoplasma agalactiae) protein is Isoleucine--tRNA ligase.